A 382-amino-acid chain; its full sequence is Norsolorinic acid reductase B (382 aa).

NADP(+) is bound at residue aspartate 64. The active-site Proton donor is the tyrosine 69. Histidine 143 serves as a coordination point for substrate. Residues 173 to 174, glutamine 199, 228 to 238, and 302 to 310 contribute to the NADP(+) site; these read SD, GVLNQGRFRTE, and RKVDHLTGV.

Belongs to the aldo/keto reductase family. Aldo/keto reductase 2 subfamily.

It participates in mycotoxin biosynthesis; aflatoxin biosynthesis. In terms of biological role, norsolorinic acid reductase; part of the gene cluster that mediates the biosynthesis of aflatoxins, a group of polyketide-derived furanocoumarins, and part of the most toxic and carcinogenic compounds among the known mycotoxins. The four major aflatoxins produced by A.parasiticus are aflatoxin B1 (AFB1), aflatoxin B2 (AFB2), aflatoxin G1 (AFG1) and aflatoxin G2 (AFG2). Within the aflatoxin pathway, the norsolorinic acid reductase aflE may play a role in the conversion of norsolorinic acid (NOR) to averantin (AVN). The biosynthesis of aflatoxins begins with the norsolorinic acid synthase aflC that combines a hexanoyl starter unit produced by the fatty acid synthase aflA/aflB and 7 malonyl-CoA extender units to synthesize the precursor NOR. The second step is the conversion of NOR to averantin and requires the norsolorinic acid ketoreductase aflD, which catalyzes the dehydration of norsolorinic acid to form (1'S)-averantin. The norsolorinic acid reductases aflE and aflF may also play a role in the conversion of NOR to AVN. The cytochrome P450 monooxygenase aflG then catalyzes the hydroxylation of AVN to 5'hydroxyaverantin (HAVN). The next step is performed by the 5'-hydroxyaverantin dehydrogenase aflH that transforms HAVN to 5'-oxoaverantin (OAVN) which is further converted to averufin (AVF) by aflK that plays a dual role in the pathway, as a 5'-oxoaverantin cyclase that mediates conversion of 5'-oxoaverantin, as well as a versicolorin B synthase in a later step in the pathway. The averufin oxidase aflI catalyzes the conversion of AVF to versiconal hemiacetal acetate (VHA). VHA is then the substrate for the versiconal hemiacetal acetate esterase aflJ to yield versiconal (VAL). Versicolorin B synthase aflK then converts VAL to versicolorin B (VERB) by closing the bisfuran ring of aflatoxin which is required for DNA-binding, thus giving to aflatoxin its activity as a mutagen. Then, the activity of the versicolorin B desaturase aflL leads to versicolorin A (VERA). A branch point starts from VERB since it can also be converted to dihydrodemethylsterigmatocystin (DMDHST), probably also by aflL, VERA being a precursor for aflatoxins B1 and G1, and DMDHST for aflatoxins B2 and G2. Next, the versicolorin reductase aflM and the cytochrome P450 monooxygenase aflN are involved in conversion of VERA to demethylsterigmatocystin (DMST). AflX and aflY seem also involved in this step, through probable aflX-mediated epoxide ring-opening step following versicolorin A oxidation and aflY-mediated Baeyer-Villiger oxidation required for the formation of the xanthone ring. The methyltransferase aflO then leads to the modification of DMST to sterigmatocystin (ST), and of DMDHST to dihydrosterigmatocystin (DHST). Both ST and DHST are then substrates of the O-methyltransferase aflP to yield O-methylsterigmatocystin (OMST) and dihydro-O-methylsterigmatocystin (DHOMST), respectively. Finally OMST is converted to aflatoxins B1 and G1, and DHOMST to aflatoxins B2 and G2, via the action of several enzymes including O-methylsterigmatocystin oxidoreductase aflQ, the cytochrome P450 monooxygenase aflU, but also the NADH-dependent flavin oxidoreductase nadA which is specifically required for the synthesis of AFG1. The chain is Norsolorinic acid reductase B from Aspergillus parasiticus (strain ATCC 56775 / NRRL 5862 / SRRC 143 / SU-1).